We begin with the raw amino-acid sequence, 125 residues long: Large ribosomal subunit protein bL19 (125 aa).

This sequence belongs to the bacterial ribosomal protein bL19 family.

Functionally, this protein is located at the 30S-50S ribosomal subunit interface and may play a role in the structure and function of the aminoacyl-tRNA binding site. This chain is Large ribosomal subunit protein bL19, found in Ehrlichia canis (strain Jake).